We begin with the raw amino-acid sequence, 712 residues long: Amine oxidase [copper-containing] gamma 1 (712 aa).

The first 24 residues, 1–24, serve as a signal peptide directing secretion; sequence MAEPSFARLFLLFFSFLLIFATYS. N146 and N173 each carry an N-linked (GlcNAc...) asparagine glycan. C188 and C210 are joined by a disulfide. Residue 352 to 363 participates in substrate binding; it reads YMDAGELGLGPT. D354 serves as the catalytic Proton acceptor. The cysteines at positions 373 and 399 are disulfide-linked. 439-444 contacts substrate; sequence VGNYDY. The active-site Schiff-base intermediate with substrate; via topaquinone is the Y442. Y442 is subject to 2',4',5'-topaquinone. Positions 499 and 501 each coordinate Cu cation. Mn(2+)-binding residues include D508, M509, and D510. N-linked (GlcNAc...) asparagine glycosylation is found at N516 and N617. The Mn(2+) site is built by D651 and I652. A Cu cation-binding site is contributed by H662.

Belongs to the copper/topaquinone oxidase family. As to quaternary structure, homodimer. Requires Cu cation as cofactor. Zn(2+) serves as cofactor. The cofactor is L-topaquinone. It depends on Mn(2+) as a cofactor. In terms of processing, topaquinone (TPQ) is generated by copper-dependent autoxidation of a specific tyrosyl residue. Mostly expressed in roots, stems and flowers, and, at lower levels, in leaves and cotyledons.

Its subcellular location is the secreted. It is found in the extracellular space. It localises to the apoplast. The enzyme catalyses a primary methyl amine + O2 + H2O = an aldehyde + H2O2 + NH4(+). It participates in amine and polyamine degradation; putrescine degradation. Functionally, copper amine oxidase that can use putrescine and spermidine as substrates. Required for abscisic acid- (ABA) and polyamine- (PA) and H(2)O(2)-dependent induced nitric oxide (NO) biosynthesis. Involved in ABA signal transduction and in responses to osmotic stress. The sequence is that of Amine oxidase [copper-containing] gamma 1 from Arabidopsis thaliana (Mouse-ear cress).